A 498-amino-acid polypeptide reads, in one-letter code: Germ cell-less protein-like 2 (498 aa).

The short motif at 33–39 is the Nuclear localization signal element; that stretch reads SRKRKRN. The BTB domain occupies 90–160; it reads SDIKIRALGR…LYTDADLSIT (71 aa).

Interacts with CUL3.

The protein localises to the nucleus matrix. It participates in protein modification; protein ubiquitination. Functionally, possible function in spermatogenesis. Probable substrate-specific adapter of an E3 ubiquitin-protein ligase complex which mediates the ubiquitination and subsequent proteasomal degradation of target proteins. The protein is Germ cell-less protein-like 2 (Gmcl2) of Mus musculus (Mouse).